Reading from the N-terminus, the 113-residue chain is uncharacterized protein (113 aa).

Disordered regions lie at residues 1 to 22 and 90 to 113; these read MGEHAIKRHMRQRKPTKHPLAQ and DGRHTTESSFEHSSPSRSPQSDDL. Positions 90–99 are enriched in basic and acidic residues; sequence DGRHTTESSF. Positions 100–113 are enriched in low complexity; sequence EHSSPSRSPQSDDL.

This is an uncharacterized protein from Mycobacterium tuberculosis (strain ATCC 25618 / H37Rv).